We begin with the raw amino-acid sequence, 139 residues long: Small ribosomal subunit protein bS6 (139 aa).

Basic and acidic residues predominate over residues 114-133; sequence KKEPREPRAPREPRVEKVDE. A disordered region spans residues 114-139; the sequence is KKEPREPRAPREPRVEKVDEQTFTEE.

It belongs to the bacterial ribosomal protein bS6 family.

Binds together with bS18 to 16S ribosomal RNA. This is Small ribosomal subunit protein bS6 from Campylobacter concisus (strain 13826).